We begin with the raw amino-acid sequence, 164 residues long: Transcriptional regulator MraZ (164 aa).

SpoVT-AbrB domains lie at 7-60 (HFTN…EIDE) and 83-126 (SEIL…EPGR). Positions 141 to 164 (LRKQLSSRPVAPDAQPPRPHGARE) are disordered. The span at 154–164 (AQPPRPHGARE) shows a compositional bias: pro residues.

Belongs to the MraZ family. Forms oligomers.

The protein resides in the cytoplasm. The protein localises to the nucleoid. This chain is Transcriptional regulator MraZ, found in Beijerinckia indica subsp. indica (strain ATCC 9039 / DSM 1715 / NCIMB 8712).